A 391-amino-acid chain; its full sequence is Argininosuccinate synthase (391 aa).

Ala6–Thr14 contributes to the ATP binding site. Tyr84 lines the L-citrulline pocket. Residue Gly114 coordinates ATP. Thr116, Asn120, and Asp121 together coordinate L-aspartate. Residue Asn120 participates in L-citrulline binding. Arg124, Ser171, Ser180, Glu253, and Tyr265 together coordinate L-citrulline.

Belongs to the argininosuccinate synthase family. Type 1 subfamily. Homotetramer.

It localises to the cytoplasm. It catalyses the reaction L-citrulline + L-aspartate + ATP = 2-(N(omega)-L-arginino)succinate + AMP + diphosphate + H(+). Its pathway is amino-acid biosynthesis; L-arginine biosynthesis; L-arginine from L-ornithine and carbamoyl phosphate: step 2/3. This is Argininosuccinate synthase from Sulfolobus acidocaldarius (strain ATCC 33909 / DSM 639 / JCM 8929 / NBRC 15157 / NCIMB 11770).